A 602-amino-acid polypeptide reads, in one-letter code: UvrABC system protein C (602 aa).

The 78-residue stretch at 17–94 (KTSGCYKMYS…IKKYKPTYNI (78 aa)) folds into the GIY-YIG domain. Residues 199 to 234 (SKLLNDIEIKMKEVIMKENFEAAIKLKETKKSLIEI) form the UVR domain.

The protein belongs to the UvrC family. In terms of assembly, interacts with UvrB in an incision complex.

The protein resides in the cytoplasm. In terms of biological role, the UvrABC repair system catalyzes the recognition and processing of DNA lesions. UvrC both incises the 5' and 3' sides of the lesion. The N-terminal half is responsible for the 3' incision and the C-terminal half is responsible for the 5' incision. The protein is UvrABC system protein C of Borrelia recurrentis (strain A1).